Reading from the N-terminus, the 197-residue chain is MFEYPQGYKLIAGVDEVGRGPLVGAVVTAAVILDPHNPIEGLADSKKLSEKKRLALADEIKEKALAWALGRAEADEIDEINILQASLLAMTRAVKSLKIQPHFVLVDGNKIPKDLDIPAQAVVKGDSIVAEISAASILAKVARDQEMEELDKQYPEYAFAKHKGYPTKLHLEKLAELGALPQHRRSFAPVKKALEQF.

The RNase H type-2 domain maps to 9–197 (KLIAGVDEVG…APVKKALEQF (189 aa)). A divalent metal cation is bound by residues Asp-15, Glu-16, and Asp-107.

The protein belongs to the RNase HII family. Requires Mn(2+) as cofactor. Mg(2+) serves as cofactor.

It localises to the cytoplasm. The catalysed reaction is Endonucleolytic cleavage to 5'-phosphomonoester.. Functionally, endonuclease that specifically degrades the RNA of RNA-DNA hybrids. The protein is Ribonuclease HII of Haemophilus influenzae (strain PittEE).